Reading from the N-terminus, the 295-residue chain is Farnesyl diphosphate synthase (295 aa).

The isopentenyl diphosphate site is built by K46, R49, and H78. Positions 85 and 91 each coordinate Mg(2+). R96 lines the (2E)-geranyl diphosphate pocket. Residue R97 coordinates isopentenyl diphosphate. (2E)-geranyl diphosphate-binding residues include K180, T181, Q220, and K237.

This sequence belongs to the FPP/GGPP synthase family. Requires Mg(2+) as cofactor.

The protein localises to the cytoplasm. It catalyses the reaction isopentenyl diphosphate + (2E)-geranyl diphosphate = (2E,6E)-farnesyl diphosphate + diphosphate. The chain is Farnesyl diphosphate synthase (ispA) from Haemophilus influenzae (strain ATCC 51907 / DSM 11121 / KW20 / Rd).